The chain runs to 605 residues: Vicilin GC72-A (605 aa).

A signal peptide spans 1–23 (MVRNKSVFVVLLFSLFLSFGLLC). 2 disordered regions span residues 52-81 (TRGQ…EDPQ) and 157-181 (GERE…QRNN). The segment covering 166–175 (EEEEESDEGE) has biased composition (acidic residues). Cupin type-1 domains are found at residues 183 to 341 (YYFH…EQLD) and 387 to 564 (FNLL…RLVD). The interval 465 to 485 (SSDWSSREEEEQEEQEVERRS) is disordered.

The protein belongs to the 7S seed storage protein family.

It is found in the vacuole. The protein localises to the aleurone grain. Its function is as follows. Seed storage protein. The protein is Vicilin GC72-A of Gossypium hirsutum (Upland cotton).